The sequence spans 368 residues: MITVDVDLGERAYPIHIGTGLLSQAELFAPHIRGTRAVIVTNETVAPLYAARVEAAIRSLGKTVDMVVLPDGESFKTWETLNRIFDALLASGADRKTTLVALGGGVIGDMTGFAAASYMRGVPFIQVPTTLLSQVDSSVGGKTGINHPLGKNMIGAFHQPQAVLADIDTLRTLPPRELAAGMAEVIKHGAIADADYFAWIERHIAGLNACDADLMAGAVRGSVQIKAAVVAQDERESGLRAILNFGHTFGHAIEAGLGYGEWLHGEAVGCGMAMAADLSHRLGFIDIDTRNRVTALTRAANLPVVAPDLGVARFIDLMRVDKKAEAGEIKFVLLRKLGQAFVTTVPDTDLRATLQHAVLRPPTEAPVA.

Residues 71–76 (DGESFK), 105–109 (GVIGD), 129–130 (TT), K142, K151, and 169–172 (TLRT) contribute to the NAD(+) site. Residues E184, H247, and H264 each contribute to the Zn(2+) site.

Belongs to the sugar phosphate cyclases superfamily. Dehydroquinate synthase family. Requires NAD(+) as cofactor. Co(2+) serves as cofactor. Zn(2+) is required as a cofactor.

The protein localises to the cytoplasm. The enzyme catalyses 7-phospho-2-dehydro-3-deoxy-D-arabino-heptonate = 3-dehydroquinate + phosphate. It participates in metabolic intermediate biosynthesis; chorismate biosynthesis; chorismate from D-erythrose 4-phosphate and phosphoenolpyruvate: step 2/7. Its function is as follows. Catalyzes the conversion of 3-deoxy-D-arabino-heptulosonate 7-phosphate (DAHP) to dehydroquinate (DHQ). The sequence is that of 3-dehydroquinate synthase from Ralstonia nicotianae (strain ATCC BAA-1114 / GMI1000) (Ralstonia solanacearum).